The primary structure comprises 120 residues: Glycine cleavage system H protein (120 aa).

In terms of domain architecture, Lipoyl-binding spans 19 to 101 (DGTVGISDFA…YTDGWLFRLD (83 aa)). K60 bears the N6-lipoyllysine mark.

This sequence belongs to the GcvH family. As to quaternary structure, the glycine cleavage system is composed of four proteins: P, T, L and H. (R)-lipoate serves as cofactor.

The glycine cleavage system catalyzes the degradation of glycine. The H protein shuttles the methylamine group of glycine from the P protein to the T protein. The chain is Glycine cleavage system H protein from Deinococcus geothermalis (strain DSM 11300 / CIP 105573 / AG-3a).